Reading from the N-terminus, the 251-residue chain is Adenosylcobinamide-GDP ribazoletransferase (251 aa).

A run of 6 helical transmembrane segments spans residues 29–49, 65–85, 110–130, 136–156, 175–195, and 198–218; these read FAGM…ILAV, SLLI…DGAM, AFGA…LCYL, LLIL…IVRY, AIDL…IARF, and LTVA…TGAW.

Belongs to the CobS family. Mg(2+) is required as a cofactor.

The protein resides in the cell inner membrane. It carries out the reaction alpha-ribazole + adenosylcob(III)inamide-GDP = adenosylcob(III)alamin + GMP + H(+). The catalysed reaction is alpha-ribazole 5'-phosphate + adenosylcob(III)inamide-GDP = adenosylcob(III)alamin 5'-phosphate + GMP + H(+). The protein operates within cofactor biosynthesis; adenosylcobalamin biosynthesis; adenosylcobalamin from cob(II)yrinate a,c-diamide: step 7/7. Its function is as follows. Joins adenosylcobinamide-GDP and alpha-ribazole to generate adenosylcobalamin (Ado-cobalamin). Also synthesizes adenosylcobalamin 5'-phosphate from adenosylcobinamide-GDP and alpha-ribazole 5'-phosphate. This is Adenosylcobinamide-GDP ribazoletransferase from Synechococcus elongatus (strain ATCC 33912 / PCC 7942 / FACHB-805) (Anacystis nidulans R2).